A 467-amino-acid chain; its full sequence is UDP-N-acetylmuramate--L-alanine ligase (467 aa).

An ATP-binding site is contributed by 112–118 (GTHGKTT).

It belongs to the MurCDEF family.

The protein localises to the cytoplasm. The enzyme catalyses UDP-N-acetyl-alpha-D-muramate + L-alanine + ATP = UDP-N-acetyl-alpha-D-muramoyl-L-alanine + ADP + phosphate + H(+). It participates in cell wall biogenesis; peptidoglycan biosynthesis. Its function is as follows. Cell wall formation. This chain is UDP-N-acetylmuramate--L-alanine ligase, found in Azoarcus sp. (strain BH72).